The primary structure comprises 189 residues: Interferon alpha-17 (189 aa).

Positions 1–23 are cleaved as a signal peptide; sequence MALSFSLLMAVLVLSYKSICSLG. Intrachain disulfides connect cysteine 24-cysteine 122 and cysteine 52-cysteine 162.

Belongs to the alpha/beta interferon family.

Its subcellular location is the secreted. In terms of biological role, produced by macrophages, IFN-alpha have antiviral activities. Interferon stimulates the production of two enzymes: a protein kinase and an oligoadenylate synthetase. The protein is Interferon alpha-17 (IFNA17) of Homo sapiens (Human).